The chain runs to 358 residues: Nuclear receptor subfamily 1 group I member 3 (358 aa).

The nuclear receptor DNA-binding region spans 18–93; sequence PRNCVVCGDR…VGMRKDMILS (76 aa). The NR C4-type zinc-finger motif lies at 21 to 41; sequence CVVCGDRATGYHFHALTCEGC. Residue threonine 48 is modified to Phosphothreonine; by PKC. The NR C4-type zinc-finger motif lies at 57 to 81; it reads CPFAGRCEVSKAQRRHCPACRLQKC. The region spanning 119-358 is the NR LBD domain; the sequence is QQKELIQTLL…MMPLLGEICS (240 aa).

This sequence belongs to the nuclear hormone receptor family. NR1 subfamily. As to quaternary structure, heterodimer of NR1I3 and RXR. Interacts with PSMC4. Interacts with ECT2. Directly interacts with DNAJC7; this complex may also include HSP90. Interacts with CRY1. Interacts with CRY2 in a ligand-dependent manner. Post-translationally, phosphorylated at Thr-48 by PKC, dephosphorylation of Thr-48 is required for nuclear translocation and activation.

It is found in the nucleus. Its subcellular location is the cytoplasm. The protein resides in the cytoskeleton. Its function is as follows. Binds and transactivates the retinoic acid response elements that control expression of the retinoic acid receptor beta 2 and alcohol dehydrogenase 3 genes. Transactivates both the phenobarbital responsive element module of the human CYP2B6 gene and the CYP3A4 xenobiotic response element. This chain is Nuclear receptor subfamily 1 group I member 3 (Nr1i3), found in Rattus norvegicus (Rat).